The chain runs to 639 residues: C-type lectin domain-containing protein 160 (639 aa).

The N-terminal stretch at 1–19 (MDLKSWILLSCTLLPLSVT) is a signal peptide. VWFA domains are found at residues 31 to 178 (DIII…VGIG) and 289 to 474 (DIIF…LCQV). In terms of domain architecture, C-type lectin spans 491–618 (KYGECFFPTK…WNSVSCTSEY (128 aa)). Cysteines 594 and 614 form a disulfide.

It is found in the secreted. This is C-type lectin domain-containing protein 160 (clec-160) from Caenorhabditis elegans.